The chain runs to 423 residues: Diels-Alderase cheD (423 aa).

An N-terminal signal peptide occupies residues 1 to 18 (MKLCALFAGAVISTSAVA). N-linked (GlcNAc...) asparagine glycans are attached at residues asparagine 84 and asparagine 132.

Belongs to the Diels-Alderase family.

It functions in the pathway secondary metabolite biosynthesis. Functionally, diels-Alderase; part of the gene cluster that mediates the biosynthesis of chaetoglobosin A which has a unique inhibitory activity against actin polymerization in mammalian cells. Chaetoglobosin A and its intermediates are involved in the morphological differentiation of C.globosum. The first step of the pathway is the synthesis of prochaetoglobosin I via condensation of one acetyl-CoA, 8 malonyl-CoA, and a L-tryptophan molecule by the PKS-NRPS hybrid synthetase cheA, followed by reduction of backbone double bond to install desired geometry by the enoyl reductase cheB. Further multiple oxidation steps performed by the cytochrome P450 monooxygenases cheE and cheG, as well as by the FAD-linked oxidoreductase cheF, lead to the formation of chaetoglobosin A. Depending on the order of action of these reductases, distinct intermediates can be identified. Within the pathway, the cytochrome P450 monooxygenase cheE catalyzes a stereospecific epoxidation on prochaetoglobosin I, cytoglobosin D, and chaetoglobosin J intermediates. The FAD-linked oxidoreductase cheF performs dehydrogenation of the C-20 hydroxyl groups in the 20-dihyrochaetoglobosin A and cytoglobosin D intermediates. Finally, the cytochrome P450 monooxygenase cheG can catalyze the stereospecific dihydroxylation of prochaetoglobosin I and prochaetoglobosin IV at C-19 and C-20, respectively. The Diels-Alderase cheD may play a role in the post-PKS-NRPS biosynthetic steps catalyzing Diels-Alder cyclization. This is Diels-Alderase cheD from Chaetomium globosum (strain ATCC 6205 / CBS 148.51 / DSM 1962 / NBRC 6347 / NRRL 1970) (Soil fungus).